We begin with the raw amino-acid sequence, 102 residues long: Sulfur globule protein CV3 (102 aa).

An N-terminal signal peptide occupies residues 1 to 25 (MTMKRLLLVSTLAGASALATLPANA).

As to quaternary structure, the protein envelope of the sulfur globules is composed of the three different proteins CV1, CV2 and CV3.

Functionally, structural protein of the sulfur globules, which are intracellular globules that serve for sulfur storage in purple sulfur bacteria. In Allochromatium vinosum (strain ATCC 17899 / DSM 180 / NBRC 103801 / NCIMB 10441 / D) (Chromatium vinosum), this protein is Sulfur globule protein CV3 (sgpC).